Reading from the N-terminus, the 171-residue chain is Adenine phosphoribosyltransferase (171 aa).

This sequence belongs to the purine/pyrimidine phosphoribosyltransferase family. Homodimer.

The protein resides in the cytoplasm. The catalysed reaction is AMP + diphosphate = 5-phospho-alpha-D-ribose 1-diphosphate + adenine. The protein operates within purine metabolism; AMP biosynthesis via salvage pathway; AMP from adenine: step 1/1. Functionally, catalyzes a salvage reaction resulting in the formation of AMP, that is energically less costly than de novo synthesis. The protein is Adenine phosphoribosyltransferase of Citrifermentans bemidjiense (strain ATCC BAA-1014 / DSM 16622 / JCM 12645 / Bem) (Geobacter bemidjiensis).